The sequence spans 127 residues: Holo-[acyl-carrier-protein] synthase (127 aa).

Positions 8 and 57 each coordinate Mg(2+).

The protein belongs to the P-Pant transferase superfamily. AcpS family. Mg(2+) serves as cofactor.

The protein localises to the cytoplasm. The enzyme catalyses apo-[ACP] + CoA = holo-[ACP] + adenosine 3',5'-bisphosphate + H(+). Its function is as follows. Transfers the 4'-phosphopantetheine moiety from coenzyme A to a Ser of acyl-carrier-protein. The chain is Holo-[acyl-carrier-protein] synthase from Vesicomyosocius okutanii subsp. Calyptogena okutanii (strain HA).